Reading from the N-terminus, the 238-residue chain is Purine nucleoside phosphorylase DeoD-type (238 aa).

Residue His-5 coordinates a purine D-ribonucleoside. Phosphate is bound by residues Gly-21, Arg-25, Arg-44, and 88–91 (RVGS). A purine D-ribonucleoside contacts are provided by residues 180 to 182 (EME) and 204 to 205 (SD). Asp-205 serves as the catalytic Proton donor.

It belongs to the PNP/UDP phosphorylase family. As to quaternary structure, homohexamer; trimer of homodimers.

The catalysed reaction is a purine D-ribonucleoside + phosphate = a purine nucleobase + alpha-D-ribose 1-phosphate. It carries out the reaction a purine 2'-deoxy-D-ribonucleoside + phosphate = a purine nucleobase + 2-deoxy-alpha-D-ribose 1-phosphate. Its function is as follows. Catalyzes the reversible phosphorolytic breakdown of the N-glycosidic bond in the beta-(deoxy)ribonucleoside molecules, with the formation of the corresponding free purine bases and pentose-1-phosphate. The sequence is that of Purine nucleoside phosphorylase DeoD-type from Proteus mirabilis (strain HI4320).